Reading from the N-terminus, the 413-residue chain is Serine--tRNA ligase (413 aa).

Position 221 to 223 (221 to 223 (TAE)) interacts with L-serine. Residue 252–254 (RRE) coordinates ATP. Glu275 is a binding site for L-serine. 339–342 (EVSS) is a binding site for ATP. Ser375 is a binding site for L-serine.

Belongs to the class-II aminoacyl-tRNA synthetase family. Type-1 seryl-tRNA synthetase subfamily. As to quaternary structure, homodimer. The tRNA molecule binds across the dimer.

It localises to the cytoplasm. The catalysed reaction is tRNA(Ser) + L-serine + ATP = L-seryl-tRNA(Ser) + AMP + diphosphate + H(+). The enzyme catalyses tRNA(Sec) + L-serine + ATP = L-seryl-tRNA(Sec) + AMP + diphosphate + H(+). The protein operates within aminoacyl-tRNA biosynthesis; selenocysteinyl-tRNA(Sec) biosynthesis; L-seryl-tRNA(Sec) from L-serine and tRNA(Sec): step 1/1. In terms of biological role, catalyzes the attachment of serine to tRNA(Ser). Is also able to aminoacylate tRNA(Sec) with serine, to form the misacylated tRNA L-seryl-tRNA(Sec), which will be further converted into selenocysteinyl-tRNA(Sec). The sequence is that of Serine--tRNA ligase from Dehalococcoides mccartyi (strain ATCC BAA-2100 / JCM 16839 / KCTC 5957 / BAV1).